Consider the following 394-residue polypeptide: Phloroisovalerophenone synthase (394 aa).

Residue cysteine 166 is part of the active site.

It belongs to the thiolase-like superfamily. Chalcone/stilbene synthases family. In terms of assembly, homodimer. In terms of tissue distribution, expressed in lupulin gland. Present at low levels in leaves but accumulates in cones.

It catalyses the reaction 3-methylbutanoyl-CoA + 3 malonyl-CoA + 3 H(+) = phlorisovalerophenone + 3 CO2 + 4 CoA. The enzyme catalyses (E)-4-coumaroyl-CoA + 3 malonyl-CoA + 3 H(+) = 2',4,4',6'-tetrahydroxychalcone + 3 CO2 + 4 CoA. The catalysed reaction is 2-methylpropanoyl-CoA + 3 malonyl-CoA + 3 H(+) = phlorisobutanophenone + 3 CO2 + 4 CoA. Its pathway is secondary metabolite biosynthesis. Its function is as follows. Involved in the biosynthesis of prenylated phenolics natural products which contribute to the bitter taste of beer and display broad biological activities. Polyketide synthase that can use 3-methylbutanoyl-CoA (isovaleryl-CoA) and 2-methylpropanoyl-CoA (isobutyryl-CoA) as substrates to produce phlorisovalerophenone (PIVP) and phlorisobutyrophenone (2-methyl-1-(2,4,6-trihydroxyphenyl)propan-1-one), respectively, intermediates in the biosynthesis of the bitter acids (alpha and beta) acids. Can also produce naringenin-chalcone (2',4,4',6'-tetrahydroxychalcone) from 4-coumaroyl-CoA with a lower efficiency. The polypeptide is Phloroisovalerophenone synthase (Humulus lupulus (European hop)).